The sequence spans 95 residues: Large ribosomal subunit protein bL28 (95 aa).

Belongs to the bacterial ribosomal protein bL28 family.

This Dinoroseobacter shibae (strain DSM 16493 / NCIMB 14021 / DFL 12) protein is Large ribosomal subunit protein bL28.